We begin with the raw amino-acid sequence, 366 residues long: NADH-quinone oxidoreductase subunit D (366 aa).

The protein belongs to the complex I 49 kDa subunit family. NDH-1 is composed of 14 different subunits. Subunits NuoB, C, D, E, F, and G constitute the peripheral sector of the complex.

Its subcellular location is the cell membrane. The enzyme catalyses a quinone + NADH + 5 H(+)(in) = a quinol + NAD(+) + 4 H(+)(out). Functionally, NDH-1 shuttles electrons from NADH, via FMN and iron-sulfur (Fe-S) centers, to quinones in the respiratory chain. The immediate electron acceptor for the enzyme in this species is believed to be a menaquinone. Couples the redox reaction to proton translocation (for every two electrons transferred, four hydrogen ions are translocated across the cytoplasmic membrane), and thus conserves the redox energy in a proton gradient. The sequence is that of NADH-quinone oxidoreductase subunit D from Bacillus mycoides (strain KBAB4) (Bacillus weihenstephanensis).